The primary structure comprises 380 residues: Probable acyl-CoA dehydrogenase YngJ (380 aa).

Residues 123 to 132 (FGLTEPNAGS), 156 to 158 (WIT), Arg-269, and 337 to 341 (QIHGG) contribute to the FAD site. Glu-364 acts as the Proton acceptor in catalysis. 366–368 (TSE) contributes to the FAD binding site.

The protein belongs to the acyl-CoA dehydrogenase family. Requires FAD as cofactor.

The enzyme catalyses a 2,3-saturated acyl-CoA + A = a 2,3-dehydroacyl-CoA + AH2. This chain is Probable acyl-CoA dehydrogenase YngJ (yngJ), found in Bacillus subtilis (strain 168).